A 343-amino-acid polypeptide reads, in one-letter code: MESTPKKAPRSKFPALLVVALALVALVFVIWRVDSAPSTNDAYASADTIDVVPEVSGRIVELAVTDNQAVKQGDLLFRIDPRPYEANLAKAEASLAALDKQIMLTQRSVDAQQFGADSVNATVEKARAAAKQASDTLRRTEPLLREGFVSAEEVDRARTAQRAAEADLNAVLLQAQSAASAVSGVDALVAQRAAVEADIALTKLHLEMATVRAPFDGRVISLKTSVGQFASAMRPIFTLIDTRHWYVIANFRETDLKNIRSGTPATIRLMSDSGKTFEGKVDSIGYGVLPDDGGLVLGGLPKVSRSINWVRVAQRFPVKIMVDKPDPEMFRIGASAVANLEPQ.

Residues 1–12 (MESTPKKAPRSK) are Cytoplasmic-facing. Residues 13-33 (FPALLVVALALVALVFVIWRV) traverse the membrane as a helical; Signal-anchor for type II membrane protein segment. Residues 34 to 343 (DSAPSTNDAY…ASAVANLEPQ (310 aa)) lie on the Periplasmic side of the membrane.

The protein belongs to the membrane fusion protein (MFP) (TC 8.A.1) family. As to quaternary structure, could be part of a tripartite efflux system composed of MdtN, MdtO and MdtP.

It localises to the cell inner membrane. Could be involved in resistance to puromycin, acriflavine and tetraphenylarsonium chloride. This chain is Multidrug resistance protein MdtN (mdtN), found in Escherichia coli O6:H1 (strain CFT073 / ATCC 700928 / UPEC).